The primary structure comprises 258 residues: Synapse differentiation-inducing gene protein 1-like (258 aa).

Residues 1 to 182 lie on the Extracellular side of the membrane; it reads MESLSELQNP…FIVIPPRDHL (182 aa). Residues 183–203 traverse the membrane as a helical segment; it reads GLAIFSMLCCFWPLGIAAFYF. Residues 204 to 228 are Cytoplasmic-facing; it reads SQGTSKAVTKGDFPLASIASRRALF. The chain crosses the membrane as a helical span at residues 229–249; it reads LAALSITIGTGVYVGVVVALI. Over 250–258 the chain is Extracellular; the sequence is AYLSKPGHI.

It belongs to the CD225/Dispanin family.

Its subcellular location is the membrane. The protein resides in the golgi apparatus. It localises to the cis-Golgi network. The chain is Synapse differentiation-inducing gene protein 1-like (syndig1l) from Danio rerio (Zebrafish).